We begin with the raw amino-acid sequence, 685 residues long: uncharacterized protein (685 aa).

Disordered stretches follow at residues 502–538 (NLNQ…SLNK) and 635–685 (RSKR…IHNA). A compositionally biased stretch (polar residues) spans 518-538 (SSENMTKFPSSRGKSTVSLNK). Basic residues predominate over residues 675-685 (KLKKSLIIHNA).

This is an uncharacterized protein from Homo sapiens (Human).